The sequence spans 146 residues: Putative type II restriction enzyme MjaORF1200P (146 aa).

To A.pernix APE2001.

The catalysed reaction is Endonucleolytic cleavage of DNA to give specific double-stranded fragments with terminal 5'-phosphates.. Its function is as follows. A putative type II restriction enzyme, its methylase would be M.MjaORF1200P (AC Q58600). The protein is Putative type II restriction enzyme MjaORF1200P of Methanocaldococcus jannaschii (strain ATCC 43067 / DSM 2661 / JAL-1 / JCM 10045 / NBRC 100440) (Methanococcus jannaschii).